Reading from the N-terminus, the 181-residue chain is Large ribosomal subunit protein uL16 (181 aa).

The protein belongs to the universal ribosomal protein uL16 family.

This is Large ribosomal subunit protein uL16 from Pyrococcus horikoshii (strain ATCC 700860 / DSM 12428 / JCM 9974 / NBRC 100139 / OT-3).